The primary structure comprises 363 residues: tRNA dimethylallyltransferase (363 aa).

Residue Gly65–Ser72 participates in ATP binding. Thr67 to Ser72 provides a ligand contact to substrate. Interaction with substrate tRNA regions lie at residues Asp90–Gln93 and Gln214–Arg218.

Belongs to the IPP transferase family. In terms of assembly, monomer. The cofactor is Mg(2+).

The catalysed reaction is adenosine(37) in tRNA + dimethylallyl diphosphate = N(6)-dimethylallyladenosine(37) in tRNA + diphosphate. Catalyzes the transfer of a dimethylallyl group onto the adenine at position 37 in tRNAs that read codons beginning with uridine, leading to the formation of N6-(dimethylallyl)adenosine (i(6)A). The protein is tRNA dimethylallyltransferase of Rickettsia rickettsii (strain Sheila Smith).